A 283-amino-acid chain; its full sequence is Pantothenate synthetase (283 aa).

Methionine 26 to histidine 33 is an ATP binding site. Histidine 33 serves as the catalytic Proton donor. A (R)-pantoate-binding site is contributed by glutamine 57. Glutamine 57 provides a ligand contact to beta-alanine. An ATP-binding site is contributed by glycine 144–aspartate 147. (R)-pantoate is bound at residue glutamine 150. ATP-binding positions include leucine 173 and methionine 181 to arginine 184.

It belongs to the pantothenate synthetase family. As to quaternary structure, homodimer.

The protein localises to the cytoplasm. It catalyses the reaction (R)-pantoate + beta-alanine + ATP = (R)-pantothenate + AMP + diphosphate + H(+). It participates in cofactor biosynthesis; (R)-pantothenate biosynthesis; (R)-pantothenate from (R)-pantoate and beta-alanine: step 1/1. Catalyzes the condensation of pantoate with beta-alanine in an ATP-dependent reaction via a pantoyl-adenylate intermediate. This is Pantothenate synthetase from Thiobacillus denitrificans (strain ATCC 25259 / T1).